We begin with the raw amino-acid sequence, 196 residues long: Phosphoheptose isomerase (196 aa).

Residues valine 36 to aspartate 195 enclose the SIS domain. Residue asparagine 51–glycine 53 participates in substrate binding. Zn(2+) contacts are provided by histidine 60 and glutamate 64. Substrate is bound by residues glutamate 64, asparagine 93–aspartate 94, serine 119–serine 121, serine 124, and glutamine 171. The Zn(2+) site is built by glutamine 171 and histidine 179.

It belongs to the SIS family. GmhA subfamily. Zn(2+) serves as cofactor.

Its subcellular location is the cytoplasm. It catalyses the reaction 2 D-sedoheptulose 7-phosphate = D-glycero-alpha-D-manno-heptose 7-phosphate + D-glycero-beta-D-manno-heptose 7-phosphate. It functions in the pathway carbohydrate biosynthesis; D-glycero-D-manno-heptose 7-phosphate biosynthesis; D-glycero-alpha-D-manno-heptose 7-phosphate and D-glycero-beta-D-manno-heptose 7-phosphate from sedoheptulose 7-phosphate: step 1/1. Functionally, catalyzes the isomerization of sedoheptulose 7-phosphate in D-glycero-D-manno-heptose 7-phosphate. The protein is Phosphoheptose isomerase of Clostridium acetobutylicum (strain ATCC 824 / DSM 792 / JCM 1419 / IAM 19013 / LMG 5710 / NBRC 13948 / NRRL B-527 / VKM B-1787 / 2291 / W).